The following is a 389-amino-acid chain: S-adenosylmethionine synthase (389 aa).

Residue histidine 17 coordinates ATP. Position 19 (aspartate 19) interacts with Mg(2+). A K(+)-binding site is contributed by glutamate 45. L-methionine contacts are provided by glutamate 58 and glutamine 101. The flexible loop stretch occupies residues 101–111 (QSPDIAQGVTE). Residues 168–170 (DSK), 234–235 (RF), aspartate 243, 249–250 (RK), alanine 266, and lysine 270 contribute to the ATP site. Aspartate 243 lines the L-methionine pocket. Lysine 274 serves as a coordination point for L-methionine.

It belongs to the AdoMet synthase family. In terms of assembly, homotetramer; dimer of dimers. It depends on Mg(2+) as a cofactor. The cofactor is K(+).

The protein localises to the cytoplasm. It catalyses the reaction L-methionine + ATP + H2O = S-adenosyl-L-methionine + phosphate + diphosphate. It participates in amino-acid biosynthesis; S-adenosyl-L-methionine biosynthesis; S-adenosyl-L-methionine from L-methionine: step 1/1. In terms of biological role, catalyzes the formation of S-adenosylmethionine (AdoMet) from methionine and ATP. The overall synthetic reaction is composed of two sequential steps, AdoMet formation and the subsequent tripolyphosphate hydrolysis which occurs prior to release of AdoMet from the enzyme. The protein is S-adenosylmethionine synthase of Geotalea uraniireducens (strain Rf4) (Geobacter uraniireducens).